A 489-amino-acid polypeptide reads, in one-letter code: Cytochrome P450 monooxygenase tazI (489 aa).

Cys433 is a heme binding site.

Belongs to the cytochrome P450 family. Requires heme as cofactor.

It functions in the pathway secondary metabolite biosynthesis. Functionally, cytochrome P450 monooxygenase; part of the gene cluster that mediates the biosynthesis of azaterrilone A and other azaphilones, a class of fungal metabolites characterized by a highly oxygenated pyrano-quinone bicyclic core and exhibiting a broad range of bioactivities. The first step of the pathway begins with the non-reducing polyketide synthase tazA that assembles one acetyl-CoA starter unit, five malonyl-CoA units, and catalyzes a series of Claisen condensations, methylation, PT-mediated cyclization, and finally releases the first hexaketide precursor through the R-domain. The tazA product then undergoes reduction on its terminal ketone and the following pyran-ring formation by yet undetermined enzyme(s). Dehydration and enoyl reduction, possibly involving the trans-enoyl reductase tazE leads to the next intermediate. TazD is predicted as an acetyltransferase and might catalyze the acetylation steps leading to the synthesis of azaterrilone A. Azaterrilone A is not the final product of the taz pathway and both the highly reducing polyketide synthase tazB and the dual enzyme tazHJ catalyze late steps of the pathway, leading to the production of the 2 final stereoisomers that contain additional polyketide modification whose structures have still to be determined. This chain is Cytochrome P450 monooxygenase tazI, found in Aspergillus terreus (strain NIH 2624 / FGSC A1156).